The primary structure comprises 238 residues: 1-(5-phosphoribosyl)-5-[(5-phosphoribosylamino)methylideneamino] imidazole-4-carboxamide isomerase (238 aa).

The active-site Proton acceptor is Asp-8. Asp-129 (proton donor) is an active-site residue.

The protein belongs to the HisA/HisF family.

It localises to the cytoplasm. The enzyme catalyses 1-(5-phospho-beta-D-ribosyl)-5-[(5-phospho-beta-D-ribosylamino)methylideneamino]imidazole-4-carboxamide = 5-[(5-phospho-1-deoxy-D-ribulos-1-ylimino)methylamino]-1-(5-phospho-beta-D-ribosyl)imidazole-4-carboxamide. It functions in the pathway amino-acid biosynthesis; L-histidine biosynthesis; L-histidine from 5-phospho-alpha-D-ribose 1-diphosphate: step 4/9. This chain is 1-(5-phosphoribosyl)-5-[(5-phosphoribosylamino)methylideneamino] imidazole-4-carboxamide isomerase, found in Brachyspira hyodysenteriae (strain ATCC 49526 / WA1).